Here is a 929-residue protein sequence, read N- to C-terminus: Band 4.1-like protein 3 (929 aa).

Methionine 1 carries the N-acetylmethionine modification. The segment at 1-72 is disordered; sequence MTTESGSDSE…STPVKREIGD (72 aa). Residue threonine 2 is modified to N-acetylthreonine; in Band 4.1-like protein 3, N-terminally processed. Residues 20-33 show a composition bias toward low complexity; that stretch reads QEAAGPQGQAGAQP. Serine 96 is modified (phosphoserine). An FERM domain is found at 118 to 399; it reads MQCKVTLLDG…EHHTFFRLLL (282 aa). Positions 402-528 are hydrophilic; it reads APPKKFLTLG…PVTALRHEGK (127 aa). Phosphoserine occurs at positions 428, 451, and 486. A disordered region spans residues 490–554; the sequence is LITTVTPEKK…TESDQEEDAE (65 aa). Threonine 495 carries the phosphothreonine modification. The span at 496 to 516 shows a compositional bias: basic and acidic residues; the sequence is PEKKAEEERVEEEDRRKKAEE. A Phosphothreonine modification is found at threonine 518. Residues 523–536 show a composition bias toward basic and acidic residues; sequence LRHEGKTDSERTDT. 2 positions are modified to phosphoserine: histidine 525 and serine 543. A Phosphothreonine modification is found at threonine 545. Serine 547 carries the post-translational modification Phosphoserine. The segment at 559 to 602 is spectrin--actin-binding; that stretch reads DLDKTQDELMKHQTNISELKRTFLETSTETALTNEWEKRLSTSP. Disordered stretches follow at residues 608–630, 665–689, and 705–807; these read RQED…SGEK, LETK…STEK, and VHAS…SPGG. Threonine 725 bears the Phosphothreonine mark. The segment covering 726–737 has biased composition (basic and acidic residues); sequence PTDRRHTGKGKE. The tract at residues 777–929 is C-terminal (CTD); it reads RTSEGLEQKS…TEITPEDGED (153 aa). Positions 789 to 802 are enriched in low complexity; the sequence is ESSTVRVESTSVGS. Phosphoserine occurs at positions 802 and 804. Threonine 923 is subject to Phosphothreonine.

As to quaternary structure, interacts (via FERM domain) with CADM1. Interacts (via FERM domain) with PRMT3; the interaction is direct and inhibits the protein-arginine N-methyltransferase activity of PRMT3. Interacts with PRMT5. Interacts with PRMT6. In terms of assembly, has the complete spectrin--actin-binding (SAB) domain and fully interacts with spectrin and actin. As to expression, detected in brain (at protein level). Highest expression in brain, lower in testis, adrenal gland, heart and kidney. Also present in muscle and epithelial cells. Isoform 1 is expressed in brain, isoform 2 is expressed in heart and isoform 3 is mostly expressed in kidney but also in heart and brain. Isoform 6 seems to be most abundant in kidney while isoform 4 and isoform 5 are predominantly expressed in heart and brain.

It is found in the cytoplasm. Its subcellular location is the cytoskeleton. It localises to the cell membrane. The protein localises to the cell junction. Tumor suppressor that inhibits cell proliferation and promotes apoptosis. Modulates the activity of protein arginine N-methyltransferases, including PRMT3 and PRMT5. The chain is Band 4.1-like protein 3 from Mus musculus (Mouse).